We begin with the raw amino-acid sequence, 90 residues long: uncharacterized protein (90 aa).

A helical transmembrane segment spans residues 69–89 (LLYIFLGAMIVIIFLVIKNQL).

Belongs to the IIV-6 466R family.

It is found in the membrane. This is an uncharacterized protein from Invertebrate iridescent virus 6 (IIV-6).